A 119-amino-acid polypeptide reads, in one-letter code: Beta-2-microglobulin (119 aa).

An N-terminal signal peptide occupies residues 1-20 (MARFVVAALLVLLCLSGLEA). Positions 25–114 (PKIQVYSRHP…VTFPTPKTVK (90 aa)) constitute an Ig-like C1-type domain. Cysteines 45 and 100 form a disulfide.

Belongs to the beta-2-microglobulin family. As to quaternary structure, heterodimer of an alpha chain and a beta chain. Beta-2-microglobulin is the beta-chain of major histocompatibility complex class I molecules.

Its subcellular location is the secreted. Its function is as follows. Component of the class I major histocompatibility complex (MHC). Involved in the presentation of peptide antigens to the immune system. The chain is Beta-2-microglobulin (B2M) from Cebus albifrons (White-fronted capuchin).